A 380-amino-acid chain; its full sequence is Cytochrome b (380 aa).

4 helical membrane-spanning segments follow: residues 34–54 (FGSL…LLAM), 78–99 (WLIR…YMHI), 114–134 (WNTG…GYVL), and 179–199 (FFAL…IHLT). Heme b-binding residues include histidine 84 and histidine 98. Heme b-binding residues include histidine 183 and histidine 197. Residue histidine 202 participates in a ubiquinone binding. A run of 4 helical transmembrane segments spans residues 227–247 (LKDI…ALFS), 289–309 (LGGV…PFLH), 321–341 (LSQS…WIGS), and 348–368 (FIII…ILFP).

The protein belongs to the cytochrome b family. In terms of assembly, the cytochrome bc1 complex contains 11 subunits: 3 respiratory subunits (MT-CYB, CYC1 and UQCRFS1), 2 core proteins (UQCRC1 and UQCRC2) and 6 low-molecular weight proteins (UQCRH/QCR6, UQCRB/QCR7, UQCRQ/QCR8, UQCR10/QCR9, UQCR11/QCR10 and a cleavage product of UQCRFS1). This cytochrome bc1 complex then forms a dimer. It depends on heme b as a cofactor.

The protein resides in the mitochondrion inner membrane. In terms of biological role, component of the ubiquinol-cytochrome c reductase complex (complex III or cytochrome b-c1 complex) that is part of the mitochondrial respiratory chain. The b-c1 complex mediates electron transfer from ubiquinol to cytochrome c. Contributes to the generation of a proton gradient across the mitochondrial membrane that is then used for ATP synthesis. The sequence is that of Cytochrome b (MT-CYB) from Oceanodroma tristrami (Tristram's storm-petrel).